Consider the following 547-residue polypeptide: Glucose-6-phosphate isomerase (547 aa).

Residue Glu352 is the Proton donor of the active site. Residues His383 and Lys511 contribute to the active site.

The protein belongs to the GPI family.

Its subcellular location is the cytoplasm. The enzyme catalyses alpha-D-glucose 6-phosphate = beta-D-fructose 6-phosphate. Its pathway is carbohydrate biosynthesis; gluconeogenesis. It functions in the pathway carbohydrate degradation; glycolysis; D-glyceraldehyde 3-phosphate and glycerone phosphate from D-glucose: step 2/4. Catalyzes the reversible isomerization of glucose-6-phosphate to fructose-6-phosphate. The chain is Glucose-6-phosphate isomerase from Rhodospirillum rubrum (strain ATCC 11170 / ATH 1.1.1 / DSM 467 / LMG 4362 / NCIMB 8255 / S1).